The sequence spans 209 residues: Uracil phosphoribosyltransferase (209 aa).

Residues Arg79, Arg104, and 131-139 contribute to the 5-phospho-alpha-D-ribose 1-diphosphate site; that span reads DPMLATGNS. Residues Ile194 and 199–201 contribute to the uracil site; that span reads GDA. A 5-phospho-alpha-D-ribose 1-diphosphate-binding site is contributed by Asp200.

This sequence belongs to the UPRTase family. It depends on Mg(2+) as a cofactor.

The catalysed reaction is UMP + diphosphate = 5-phospho-alpha-D-ribose 1-diphosphate + uracil. It functions in the pathway pyrimidine metabolism; UMP biosynthesis via salvage pathway; UMP from uracil: step 1/1. With respect to regulation, allosterically activated by GTP. Functionally, catalyzes the conversion of uracil and 5-phospho-alpha-D-ribose 1-diphosphate (PRPP) to UMP and diphosphate. The polypeptide is Uracil phosphoribosyltransferase (Rhodococcus jostii (strain RHA1)).